The following is a 1185-amino-acid chain: 205 kDa microtubule-associated protein (1185 aa).

Over residues 146 to 159 (EPNQLPEQLQQQQQ) the composition is skewed to low complexity. Residues 146 to 196 (EPNQLPEQLQQQQQIESQGVHEDPRQEDEDEHSSVATTYGTSSLSENNSSP) are disordered. Positions 179–196 (SVATTYGTSSLSENNSSP) are enriched in polar residues. 2 positions are modified to phosphoserine: S354 and S448. Y450 carries the phosphotyrosine modification. 3 positions are modified to phosphoserine: S709, S710, and S712. T721 bears the Phosphothreonine mark. A Phosphoserine modification is found at S728. Residues 745–977 (TAADGQSISQ…ASTKVRPAAT (233 aa)) form a microtubule-binding region. A compositionally biased stretch (low complexity) spans 856–866 (SIATKTSTTSS). Disordered stretches follow at residues 856–1035 (SIAT…TSTA) and 1054–1114 (SASL…SSPA). Composition is skewed to polar residues over residues 867–881 (LTGN…NVGS) and 908–936 (TITN…STNA). S874 carries the post-translational modification Phosphoserine. Residues 940-952 (ATSGTGSVASSTA) are compositionally biased toward low complexity. Residues 989 to 999 (PRSTISSTTTV) are compositionally biased toward polar residues. Residues 1003-1015 (PSTSTPSFSTRSP) show a composition bias toward low complexity. Polar residues-rich tracts occupy residues 1016–1026 (NKQQSNGLGKN) and 1054–1066 (SASL…STSR). A phosphoserine mark is found at S1075 and S1086. Residues 1100–1111 (LTPQSKDGTAKS) are compositionally biased toward polar residues. S1121 bears the Phosphoserine mark.

It localises to the cytoplasm. Its subcellular location is the cytoskeleton. The protein localises to the spindle. Its function is as follows. May play an important role in the regulation of microtubule assembly and interaction. The chain is 205 kDa microtubule-associated protein (Map205) from Drosophila melanogaster (Fruit fly).